The primary structure comprises 989 residues: Bifunctional glutamine synthetase adenylyltransferase/adenylyl-removing enzyme (989 aa).

The tract at residues 1–474 (MNSSAIDADI…HYGKLFEGDP (474 aa)) is adenylyl removase. Positions 480–989 (LPIDYAGGPD…FNRLIGGDSA (510 aa)) are adenylyl transferase.

This sequence belongs to the GlnE family. Mg(2+) serves as cofactor.

The catalysed reaction is [glutamine synthetase]-O(4)-(5'-adenylyl)-L-tyrosine + phosphate = [glutamine synthetase]-L-tyrosine + ADP. It carries out the reaction [glutamine synthetase]-L-tyrosine + ATP = [glutamine synthetase]-O(4)-(5'-adenylyl)-L-tyrosine + diphosphate. In terms of biological role, involved in the regulation of glutamine synthetase GlnA, a key enzyme in the process to assimilate ammonia. When cellular nitrogen levels are high, the C-terminal adenylyl transferase (AT) inactivates GlnA by covalent transfer of an adenylyl group from ATP to specific tyrosine residue of GlnA, thus reducing its activity. Conversely, when nitrogen levels are low, the N-terminal adenylyl removase (AR) activates GlnA by removing the adenylyl group by phosphorolysis, increasing its activity. The regulatory region of GlnE binds the signal transduction protein PII (GlnB) which indicates the nitrogen status of the cell. This chain is Bifunctional glutamine synthetase adenylyltransferase/adenylyl-removing enzyme, found in Rhodopseudomonas palustris (strain BisB5).